Reading from the N-terminus, the 145-residue chain is Large ribosomal subunit protein uL11m (145 aa).

It belongs to the universal ribosomal protein uL11 family.

It localises to the mitochondrion. The sequence is that of Large ribosomal subunit protein uL11m (RPL11) from Reclinomonas americana.